The primary structure comprises 221 residues: Imidazoleglycerol-phosphate dehydratase (221 aa).

The protein belongs to the imidazoleglycerol-phosphate dehydratase family.

The catalysed reaction is D-erythro-1-(imidazol-4-yl)glycerol 3-phosphate = 3-(imidazol-4-yl)-2-oxopropyl phosphate + H2O. It participates in amino-acid biosynthesis; L-histidine biosynthesis; L-histidine from 5-phospho-alpha-D-ribose 1-diphosphate: step 6/9. This is Imidazoleglycerol-phosphate dehydratase (HIS3) from Kluyveromyces lactis (strain ATCC 8585 / CBS 2359 / DSM 70799 / NBRC 1267 / NRRL Y-1140 / WM37) (Yeast).